We begin with the raw amino-acid sequence, 266 residues long: 2-C-methyl-D-erythritol 4-phosphate cytidylyltransferase (266 aa).

Positions asparagine 229–isoleucine 266 are disordered. Residues histidine 243–alanine 252 are compositionally biased toward polar residues.

Belongs to the IspD/TarI cytidylyltransferase family. IspD subfamily.

The catalysed reaction is 2-C-methyl-D-erythritol 4-phosphate + CTP + H(+) = 4-CDP-2-C-methyl-D-erythritol + diphosphate. It functions in the pathway isoprenoid biosynthesis; isopentenyl diphosphate biosynthesis via DXP pathway; isopentenyl diphosphate from 1-deoxy-D-xylulose 5-phosphate: step 2/6. Catalyzes the formation of 4-diphosphocytidyl-2-C-methyl-D-erythritol from CTP and 2-C-methyl-D-erythritol 4-phosphate (MEP). The chain is 2-C-methyl-D-erythritol 4-phosphate cytidylyltransferase from Xanthomonas axonopodis pv. citri (strain 306).